We begin with the raw amino-acid sequence, 206 residues long: Probable glutathione S-transferase 7 (206 aa).

A GST N-terminal domain is found at 2–79 (VHYKVSYFPI…YLARQFGING (78 aa)). Glutathione-binding positions include Y8, W39, K43, 49-51 (GQL), and 63-64 (QS). In terms of domain architecture, GST C-terminal spans 81-206 (CAWEEAQVNS…WLETRPVTPF (126 aa)).

Belongs to the GST superfamily. Sigma family.

It carries out the reaction RX + glutathione = an S-substituted glutathione + a halide anion + H(+). Functionally, conjugation of reduced glutathione to a wide number of exogenous and endogenous hydrophobic electrophiles. May play a role in the detoxification of reactive oxygen species produced during pathogenic bacterial infection. The protein is Probable glutathione S-transferase 7 (gst-7) of Caenorhabditis elegans.